We begin with the raw amino-acid sequence, 207 residues long: Ribosomal RNA small subunit methyltransferase G (207 aa).

S-adenosyl-L-methionine is bound by residues Gly76, Gln81, 127-128 (VE), and Arg141.

The protein belongs to the methyltransferase superfamily. RNA methyltransferase RsmG family.

The protein resides in the cytoplasm. The catalysed reaction is guanosine(527) in 16S rRNA + S-adenosyl-L-methionine = N(7)-methylguanosine(527) in 16S rRNA + S-adenosyl-L-homocysteine. Specifically methylates the N7 position of guanine in position 527 of 16S rRNA. This chain is Ribosomal RNA small subunit methyltransferase G, found in Neisseria meningitidis serogroup A / serotype 4A (strain DSM 15465 / Z2491).